The sequence spans 383 residues: Chorismate synthase (383 aa).

NADP(+) is bound by residues Arg39 and Arg45. FMN is bound by residues 128 to 130 (RAS), Gly291, 306 to 310 (KPIAT), and Arg332.

It belongs to the chorismate synthase family. In terms of assembly, homotetramer. FMNH2 serves as cofactor.

It catalyses the reaction 5-O-(1-carboxyvinyl)-3-phosphoshikimate = chorismate + phosphate. Its pathway is metabolic intermediate biosynthesis; chorismate biosynthesis; chorismate from D-erythrose 4-phosphate and phosphoenolpyruvate: step 7/7. Catalyzes the anti-1,4-elimination of the C-3 phosphate and the C-6 proR hydrogen from 5-enolpyruvylshikimate-3-phosphate (EPSP) to yield chorismate, which is the branch point compound that serves as the starting substrate for the three terminal pathways of aromatic amino acid biosynthesis. This reaction introduces a second double bond into the aromatic ring system. This is Chorismate synthase from Thermus thermophilus (strain ATCC 27634 / DSM 579 / HB8).